A 478-amino-acid chain; its full sequence is MTRIKINARRIFSLLIPFFFFTSVHAEQTAAPAKPVTVEAKNETFAPQHPDQYLSWKATSEQSERVDALAEDPRLVILWAGYPFSHDYNKPRGHAFAVTDVRETLRTGAPKNAEDGPLPMACWSCKSPDVARLIQKDGEDGYFHGKWARGGPEIVNNLGCADCHNTASPEFAKGKPELTLSRPYAARAMEAIGKPFEKAGRFDQQSMVCGQCHVEYYFDGKNKAVKFPWDDGMKVENMEQYYDKIAFSDWTNSLSKTPMLKAQHPEYETWTAGIHGKNNVTCIDCHMPKVQNAEGKLYTDHKIGNPFDNFAQTCANCHTQDKAALQKVVAERKQSINDLKIKVEDQLVHAHFEAKAALDAGATEAEMKPIQDDIRHAQWRWDLAIASHGIHMHAPEEGLRMLGTAMDKAADARTKLARLLATKGITHEIQIPDISTKEKAQQAIGLNMEQIKAEKQDFIKTVIPQWEEQARKNGLLSQ.

Residues 1-26 (MTRIKINARRIFSLLIPFFFFTSVHA) form the signal peptide. Histidine 94 is a binding site for heme c. The heme site is built by cysteine 122, cysteine 125, and lysine 126. Heme c contacts are provided by cysteine 160, cysteine 163, histidine 164, cysteine 209, cysteine 212, and histidine 213. Glutamate 215, tyrosine 216, lysine 261, and glutamine 263 together coordinate Ca(2+). Position 216 (tyrosine 216) interacts with substrate. Histidine 264 is a binding site for substrate. Residues histidine 275, cysteine 282, cysteine 285, histidine 286, histidine 301, cysteine 314, cysteine 317, histidine 318, and histidine 393 each contribute to the heme c site.

Belongs to the cytochrome c-552 family. Ca(2+) is required as a cofactor. Heme c serves as cofactor.

Its subcellular location is the periplasm. The enzyme catalyses 6 Fe(III)-[cytochrome c] + NH4(+) + 2 H2O = 6 Fe(II)-[cytochrome c] + nitrite + 8 H(+). The protein operates within nitrogen metabolism; nitrate reduction (assimilation). Catalyzes the reduction of nitrite to ammonia, consuming six electrons in the process. This Escherichia coli O157:H7 (strain EC4115 / EHEC) protein is Cytochrome c-552.